A 146-amino-acid polypeptide reads, in one-letter code: Hemoglobin subunit beta (146 aa).

Valine 1 bears the N-acetylvaline mark. Positions 2–146 (HLTGEEKAAV…VATALAHKYH (145 aa)) constitute a Globin domain. Residue threonine 12 is modified to Phosphothreonine. A Phosphoserine modification is found at serine 44. At lysine 59 the chain carries N6-acetyllysine. Histidine 63 lines the heme b pocket. An N6-acetyllysine modification is found at lysine 82. Histidine 92 is a heme b binding site. Cysteine 93 carries the S-nitrosocysteine modification. Lysine 144 carries the post-translational modification N6-acetyllysine.

The protein belongs to the globin family. In terms of assembly, heterotetramer of two alpha chains and two beta chains. Red blood cells.

Involved in oxygen transport from the lung to the various peripheral tissues. This Macroderma gigas (Australian ghost bat) protein is Hemoglobin subunit beta (HBB).